Consider the following 677-residue polypeptide: Beta-galactosidase BgaA (677 aa).

Position 112 (R112) interacts with substrate. A Zn(2+)-binding site is contributed by C116. N150 serves as a coordination point for substrate. E151 serves as the catalytic Proton donor. The Zn(2+) site is built by C156, C158, and C161. The active-site Nucleophile is the E309. Substrate is bound by residues W317 and 357-360 (EKYH).

Belongs to the glycosyl hydrolase 42 family. In terms of assembly, dimer.

It catalyses the reaction Hydrolysis of terminal non-reducing beta-D-galactose residues in beta-D-galactosides.. Its activity is regulated as follows. No activity is lost during treatment with 20 or 100 mM EDTA in Z buffer for 3 hours at 0 degrees Celsius, nor is activity greatly stimulated by the addition of cations. Inhibited by 1 mM zinc and 1 mM copper, the levels of activity decrease to 10% of the untreated control. Nickel, cobalt and manganese at concentrations of 10 mM decrease enzyme activity to either 40% (for nickel and cobalt) or 60% (for manganese) of the activity in untreated controls. No change in enzyme activity in the presence of calcium and magnesium at concentrations up to 50 mM. EDTA-treated enzyme exhibits a slight increase in relative specific activity when it is assayed in the presence of 50 mM NaCl or 50 mM KCl, it does not exhibit enhanced activity at concentrations greater than 250 mM. Maintains between 20 and 40% of activity in the presence of 4 M NaCl or 4 M KCl, and it is more active in the presence of KCl than in the presence of NaCl. Retains 50% of activity in the presence of 3 M KCl or 2.5 M NaCl. Functionally, hydrolyzes o-nitrophenyl-beta-D-galactopyranoside (ONPG), p-nitrophenyl-beta-D-galactopyranoside (PNPG), 5-bromo-4-chloro-3-indoyl-beta-D-galactosde (X-gal), o-nitrophenyl-beta-D-fucopyranoside (ONPF) and p-nitrophenyl-beta-D-fucopyranoside (PNPF) with greatest activity towards ONPG and PNPG and low levels of activity with ONPF and PNPF. Detectable, but very low levels of activity towards p-nitrophenyl-beta-lactose (PNPL), p-nitrophenyl-beta-cellobiose (PNPC), p-nitrophenyl-alpha-galactopyranoside (PNP-alpha-G), and p-nitrophenyl-beta-xylopyranoside (PNPX). This chain is Beta-galactosidase BgaA, found in Planococcus sp. (strain 'SOS Orange').